Reading from the N-terminus, the 959-residue chain is Protein NLP7 (959 aa).

Residues 1–22 (MCEPDDNSARNGVTTQPSRSRE) form a disordered region. Residues 9 to 18 (ARNGVTTQPS) are compositionally biased toward polar residues. Positions 578-659 (KKKTEKKRGK…IESVQGTDGG (82 aa)) constitute an RWP-RK domain. Residues 633 to 654 (SRKIKKVNRSITKLKRVIESVQ) adopt a coiled-coil conformation. Composition is skewed to polar residues over residues 673–687 (THGQTSAQPLNSPNG), 694–703 (PNTNNSPNHW), and 735–745 (GTPTSHGSCDG). The tract at residues 673 to 760 (THGQTSAQPL…PKVPNQDPLF (88 aa)) is disordered. A PB1 domain is found at 863 to 945 (TVTIKASYKD…KIVRLLVHDV (83 aa)).

As to quaternary structure, interacts with NRG2. As to expression, expressed in roots, stems, leaves, flowers and siliques. Detected in root hairs, emerging secondary roots, vascular tissues, leaf parenchyma cells and stomata.

It localises to the nucleus. Functionally, transcription factor involved in regulation of nitrate assimilation and in transduction of the nitrate signal. In Arabidopsis thaliana (Mouse-ear cress), this protein is Protein NLP7 (NLP7).